A 1436-amino-acid polypeptide reads, in one-letter code: Antigen WC1.1 (1436 aa).

The first 25 residues, 1–25 (MALGRHLSLRGLCVLLLGTMVGGQA), serve as a signal peptide directing secretion. SRCR domains lie at 28–131 (LRLK…VVCS), 134–234 (VRLA…VVCS), and 239–340 (VRLM…VICS). 2 disulfide bridges follow: Cys-66/Cys-130 and Cys-97/Cys-107. A glycan (N-linked (GlcNAc...) asparagine) is linked at Asn-162. Intrachain disulfides connect Cys-172–Cys-233 and Cys-203–Cys-213. Asn-244 and Asn-256 each carry an N-linked (GlcNAc...) asparagine glycan. 3 disulfides stabilise this stretch: Cys-265–Cys-329, Cys-278–Cys-339, and Cys-309–Cys-319. 3 N-linked (GlcNAc...) asparagine glycosylation sites follow: Asn-351, Asn-424, and Asn-444. 5 consecutive SRCR domains span residues 376–476 (LRLV…VICS), 481–581 (LRMV…IWCA), 586–686 (IRLV…VICS), 689–789 (VRLA…VVCS), and 794–895 (VQLM…VICS). 3 disulfide bridges follow: Cys-401/Cys-465, Cys-414/Cys-475, and Cys-445/Cys-455. N-linked (GlcNAc...) asparagine glycans are attached at residues Asn-499 and Asn-531. 6 cysteine pairs are disulfide-bonded: Cys-506/Cys-570, Cys-519/Cys-580, Cys-550/Cys-560, Cys-611/Cys-675, Cys-624/Cys-685, and Cys-655/Cys-665. Residue Asn-717 is glycosylated (N-linked (GlcNAc...) asparagine). 2 disulfide bridges follow: Cys-727-Cys-788 and Cys-758-Cys-768. Residue Asn-799 is glycosylated (N-linked (GlcNAc...) asparagine). Disulfide bonds link Cys-820–Cys-884, Cys-833–Cys-894, and Cys-864–Cys-874. N-linked (GlcNAc...) asparagine glycosylation is found at Asn-897, Asn-979, and Asn-999. 3 consecutive SRCR domains span residues 931-1031 (LRLV…VICS), 1036-1136 (LRMV…ISCE), and 1155-1255 (LRLR…VRCS). 3 disulfides stabilise this stretch: Cys-956-Cys-1020, Cys-969-Cys-1030, and Cys-1000-Cys-1010. Residues Asn-1054 and Asn-1086 are each glycosylated (N-linked (GlcNAc...) asparagine). 3 cysteine pairs are disulfide-bonded: Cys-1061–Cys-1125, Cys-1074–Cys-1135, and Cys-1105–Cys-1115. N-linked (GlcNAc...) asparagine glycans are attached at residues Asn-1173 and Asn-1214. Intrachain disulfides connect Cys-1180–Cys-1244, Cys-1193–Cys-1254, and Cys-1224–Cys-1234. The segment at 1337–1410 (EGLGSPDQMT…PGEGEESFWL (74 aa)) is disordered. Positions 1348–1358 (VPDENYDDAEE) are enriched in acidic residues. Polar residues predominate over residues 1384–1393 (RSSQTGSFLN). Asn-1393 is a glycosylation site (N-linked (GlcNAc...) asparagine).

In terms of tissue distribution, expressed on subsets of CD4-CD8- gamma delta T lymphocytes.

The protein localises to the secreted. The sequence is that of Antigen WC1.1 from Bos taurus (Bovine).